The following is a 365-amino-acid chain: Flagellar P-ring protein (365 aa).

Positions 1-19 (MIKFLSALILLLVTTAAQA) are cleaved as a signal peptide.

The protein belongs to the FlgI family. The basal body constitutes a major portion of the flagellar organelle and consists of four rings (L,P,S, and M) mounted on a central rod.

The protein resides in the periplasm. It is found in the bacterial flagellum basal body. In terms of biological role, assembles around the rod to form the L-ring and probably protects the motor/basal body from shearing forces during rotation. This Shigella boydii serotype 4 (strain Sb227) protein is Flagellar P-ring protein.